We begin with the raw amino-acid sequence, 433 residues long: Serine hydroxymethyltransferase (433 aa).

(6S)-5,6,7,8-tetrahydrofolate is bound at residue 121–123 (AHV). Lys227 bears the N6-(pyridoxal phosphate)lysine mark. Glu243 provides a ligand contact to (6S)-5,6,7,8-tetrahydrofolate.

Belongs to the SHMT family. As to quaternary structure, homodimer. It depends on pyridoxal 5'-phosphate as a cofactor.

It localises to the cytoplasm. It functions in the pathway amino-acid biosynthesis; glycine biosynthesis; glycine from L-serine: step 1/1. Its function is as follows. Catalyzes the reversible interconversion of serine and glycine with a modified folate serving as the one-carbon carrier. Also exhibits a pteridine-independent aldolase activity toward beta-hydroxyamino acids, producing glycine and aldehydes, via a retro-aldol mechanism. The polypeptide is Serine hydroxymethyltransferase (Saccharolobus islandicus (strain Y.N.15.51 / Yellowstone #2) (Sulfolobus islandicus)).